The sequence spans 1112 residues: MGDMSNSDFYAKNQRNEGNHAAAFGCSLMELRSLMELRGTEAVVKLQEDYGGVEGLCKRLKTSPTEGLAGAQTDLDKRKEIFGKNLIPPKKPKTFLQLVWEALQDVTLIILEIAALISLGLSFYHPPGETGGESCGAAAGGVEDEGEADAGWIEGAAILLSVVCVVLVTAFNDWSKEKQFRGLQSRIEQEQKFQVVRGSQVIQLPVADILVGDIAQIKYGDLLPSDGVLIQGNDLKIDESSLTGESDHVKKSADKDPMLLSGTHVMEGSGRMVVTAVGVNSQTGIIFTLLGAGVEEEEKKEKKGGAVEDGHQNTGKMQDGNMESNQIKVKKQDGAAAMEMQPLKSAEGGEADEKERKKVSAPKKEKSVLQGKLTKLAVQIGKAGLLMSAITVIILVLYFAIDNFVMQKRPWMPECTPIYIQYFVKFFIIGVTVLVVAVPEGLPLAVTISLAYSVKKMMKDNNLVRHLDACETMGNATAICSDKTGTLTTNRMTAVQLYVGDVRYKEIPDPGVLPPKSLDLLVNAISINSAYTTKILPPDKEGGLPKQVGNKTECGLLGLVLELKRDYQPIRNQIPEEKLYKVYTFNSVRKSMSTVIKLPDGSFRMYSKGASEIVLKKCSHILNEVGEPRVFRPRDKDEMVKKVIEPMACDGLRTICVAYRDFSSNPEPNWDDENNILNDLTAICVVGIEDPVRPEVPNAIQKCQRAGITVRMVTGANINTARAIAIKCGIIHPGEDFLCIDGKEFNRRIRNEKGEVEQERIDKVWPKLRVLARSSPTDKHTLVKGIIDSTMADQRQVVAVTGDGTNDGPALKKADVGFAMGIAGTDVAKEASDIILTDDNFSSIVKAVMWGRNVYDSISKFLQFQLTVNVVAVIVAFTGACITQDSPLKAVQMLWVNLIMDTFASLALATEPPTESLLKRKPYGRNKPLISSTMTKNILGHGVYQLIIIFTLLFVGEQIFDIDSGRNAPLHSPPSEHYTIIFNTFVMMQLFNEINARKIHGERNVFDGIFRNPIFCSIVFGTFAVQIVIVQFGGKPFSCQPLDLEKWMWCVFLGLGELVWGQVIATIPNSRLRFLRRAGQLTQKDELPEEDVNEENEEIDHAERELRRGQIL.

The Cytoplasmic portion of the chain corresponds to 1–94 (MGDMSNSDFY…NLIPPKKPKT (94 aa)). A helical membrane pass occupies residues 95–115 (FLQLVWEALQDVTLIILEIAA). The Extracellular portion of the chain corresponds to 116–152 (LISLGLSFYHPPGETGGESCGAAAGGVEDEGEADAGW). The helical transmembrane segment at 153 to 173 (IEGAAILLSVVCVVLVTAFND) threads the bilayer. The Cytoplasmic segment spans residues 174–373 (WSKEKQFRGL…KEKSVLQGKL (200 aa)). Residues 298 to 311 (EKKEKKGGAVEDGH) show a composition bias toward basic and acidic residues. Positions 298-363 (EKKEKKGGAV…KERKKVSAPK (66 aa)) are disordered. Positions 312–327 (QNTGKMQDGNMESNQI) are enriched in polar residues. Residues 351–363 (ADEKERKKVSAPK) are compositionally biased toward basic and acidic residues. Residues 374 to 393 (TKLAVQIGKAGLLMSAITVI) traverse the membrane as a helical segment. Topologically, residues 394–426 (ILVLYFAIDNFVMQKRPWMPECTPIYIQYFVKF) are extracellular. A helical transmembrane segment spans residues 427 to 444 (FIIGVTVLVVAVPEGLPL). Residues 445–858 (AVTISLAYSV…MWGRNVYDSI (414 aa)) lie on the Cytoplasmic side of the membrane. Asp-482 (4-aspartylphosphate intermediate) is an active-site residue. Asp-803 and Asp-807 together coordinate Mg(2+). A helical transmembrane segment spans residues 859-878 (SKFLQFQLTVNVVAVIVAFT). The Extracellular portion of the chain corresponds to 879–888 (GACITQDSPL). The chain crosses the membrane as a helical span at residues 889–909 (KAVQMLWVNLIMDTFASLALA). The Cytoplasmic segment spans residues 910-929 (TEPPTESLLKRKPYGRNKPL). Residues 930–952 (ISSTMTKNILGHGVYQLIIIFTL) traverse the membrane as a helical segment. Topologically, residues 953 to 970 (LFVGEQIFDIDSGRNAPL) are extracellular. The helical transmembrane segment at 971-992 (HSPPSEHYTIIFNTFVMMQLFN) threads the bilayer. The Cytoplasmic segment spans residues 993 to 1011 (EINARKIHGERNVFDGIFR). Residues 1012–1033 (NPIFCSIVFGTFAVQIVIVQFG) form a helical membrane-spanning segment. Residues 1034-1043 (GKPFSCQPLD) lie on the Extracellular side of the membrane. The helical transmembrane segment at 1044–1065 (LEKWMWCVFLGLGELVWGQVIA) threads the bilayer. Residues 1066 to 1112 (TIPNSRLRFLRRAGQLTQKDELPEEDVNEENEEIDHAERELRRGQIL) lie on the Cytoplasmic side of the membrane. Residues 1086–1112 (ELPEEDVNEENEEIDHAERELRRGQIL) are disordered. A compositionally biased stretch (acidic residues) spans 1087-1098 (LPEEDVNEENEE). Positions 1099–1112 (IDHAERELRRGQIL) are enriched in basic and acidic residues. A calmodulin-binding subdomain A region spans residues 1106-1112 (LRRGQIL).

The protein belongs to the cation transport ATPase (P-type) (TC 3.A.3) family. Type IIB subfamily.

The protein localises to the cell membrane. It carries out the reaction Ca(2+)(in) + ATP + H2O = Ca(2+)(out) + ADP + phosphate + H(+). Its function is as follows. This magnesium-dependent enzyme catalyzes the hydrolysis of ATP coupled with the transport of calcium out of the cell. The chain is Plasma membrane calcium-transporting ATPase 2 (atp2b2) from Oreochromis mossambicus (Mozambique tilapia).